The sequence spans 951 residues: Serine/threonine-protein kinase ATG1 (951 aa).

The 306-residue stretch at 22–327 (FTINEEIGKG…FPEYFAHPVV (306 aa)) folds into the Protein kinase domain. Residues 28–36 (IGKGSFATV) and lysine 51 each bind ATP. The active-site Proton acceptor is aspartate 165. 4 disordered regions span residues 343–375 (IITPSRSPEASVARHPSLRERQRENPTPKPVET), 387–458 (EQAP…YDEQ), 514–573 (HIPK…SSPS), and 924–951 (HQSMPPPSSPRHSHSGGTTPTIANTPPH). Basic and acidic residues-rich tracts occupy residues 359-368 (SLRERQRENP) and 432-442 (PRQRDRTERHY). 2 stretches are compositionally biased toward polar residues: residues 547 to 573 (AQGNTRPDTSSARNSYGSYGKTGSSPS) and 939 to 951 (GGTTPTIANTPPH).

It belongs to the protein kinase superfamily. Ser/Thr protein kinase family. APG1/unc-51/ULK1 subfamily. As to quaternary structure, homodimer. Forms a ternary complex with ATG13 and ATG17.

It is found in the cytoplasm. The protein resides in the preautophagosomal structure membrane. The enzyme catalyses L-seryl-[protein] + ATP = O-phospho-L-seryl-[protein] + ADP + H(+). It carries out the reaction L-threonyl-[protein] + ATP = O-phospho-L-threonyl-[protein] + ADP + H(+). Its function is as follows. Serine/threonine protein kinase involved in the cytoplasm to vacuole transport (Cvt) and found to be essential in autophagy, where it is required for the formation of autophagosomes. Involved in the clearance of protein aggregates which cannot be efficiently cleared by the proteasome. Required for selective autophagic degradation of the nucleus (nucleophagy) as well as for mitophagy which contributes to regulate mitochondrial quantity and quality by eliminating the mitochondria to a basal level to fulfill cellular energy requirements and preventing excess ROS production. Also involved in endoplasmic reticulum-specific autophagic process, in selective removal of ER-associated degradation (ERAD) substrates. Plays a key role in ATG9 and ATG23 cycling through the pre-autophagosomal structure and is necessary to promote ATG18 binding to ATG9 through phosphorylation of ATG9. Catalyzes phosphorylation of ATG4, decreasing the interaction between ATG4 and ATG8 and impairing deconjugation of PE-conjugated forms of ATG8. This chain is Serine/threonine-protein kinase ATG1, found in Sclerotinia sclerotiorum (strain ATCC 18683 / 1980 / Ss-1) (White mold).